We begin with the raw amino-acid sequence, 320 residues long: Olfactory receptor 52W1 (320 aa).

Residues 1–30 (MAETLQLNSTFLHPNFFILTGFPGLGSAQT) lie on the Extracellular side of the membrane. N-linked (GlcNAc...) asparagine glycosylation occurs at asparagine 8. Residues 31 to 51 (WLTLVFGPIYLLALLGNGALP) traverse the membrane as a helical segment. The Cytoplasmic segment spans residues 52–59 (AVVWIDST). The helical transmembrane segment at 60–80 (LHQPMFLLLAILAATDLGLAT) threads the bilayer. Residues 81 to 104 (SIAPGLLAVLWLGPRSVPYAVCLV) are Extracellular-facing. A helical transmembrane segment spans residues 105-125 (QMFFVHALTAMESGVLLAMAC). The Cytoplasmic portion of the chain corresponds to 126-144 (DRAAAIGRPLHYPVLVTKA). The chain crosses the membrane as a helical span at residues 145–165 (CVGYAALALALKAVAIVVPFP). Residues 166–201 (LLVAKFEHFQAKTIGHTYCAHMAVVELVVGNTQATN) lie on the Extracellular side of the membrane. The helical transmembrane segment at 202 to 222 (LYGLALSLAISGMDILGITGS) threads the bilayer. Topologically, residues 223-242 (YGLIAHAVLQLPTREAHAKA) are cytoplasmic. A helical membrane pass occupies residues 243-263 (FGTCSSHICVILAFYIPGLFS). The Extracellular segment spans residues 264–279 (YLTHRFGHHTVPKPVH). A helical transmembrane segment spans residues 280 to 300 (ILLSNIYLLLPPALNPLIYGA). The Cytoplasmic segment spans residues 301–320 (RTKQIRDRLLETFTFRKSPL).

This sequence belongs to the G-protein coupled receptor 1 family.

It localises to the cell membrane. Odorant receptor. This is Olfactory receptor 52W1 (OR52W1) from Homo sapiens (Human).